The chain runs to 225 residues: Insulin-induced gene 2 protein (225 aa).

Residues 1 to 28 lie on the Cytoplasmic side of the membrane; that stretch reads MAEGETKSPGPKKCGPYISSVTSQSVNL. A helical transmembrane segment spans residues 29–51; that stretch reads MIRGVVLFFIGVFLALVLNLLQI. Residues 52–70 are Lumenal-facing; the sequence is QRNVTLFPPDVIASIFSSA. Residues 71–88 traverse the membrane as a helical segment; it reads WWVPPCCGTASAVIGLLY. At 89-103 the chain is on the cytoplasmic side; sequence PCIDRHLGEPHKFKR. Residues 104 to 126 traverse the membrane as a helical segment; that stretch reads EWSSVMRCVAVFVGINHASAKVD. Residues 127–129 are Lumenal-facing; the sequence is FDN. The chain crosses the membrane as a helical span at residues 130-148; the sequence is NIQLSLTLAALSIGLWWTF. Residues 149-153 lie on the Cytoplasmic side of the membrane; that stretch reads DRSRS. Ser-151 carries the phosphoserine modification. A helical transmembrane segment spans residues 154-175; sequence GFGLGVGIAFLATVVTQLLVYN. Topologically, residues 176 to 189 are lumenal; that stretch reads GVYQYTSPDFLYVR. A helical membrane pass occupies residues 190–207; the sequence is SWLPCIFFAGGITMGNIG. Over 208-225 the chain is Cytoplasmic; that stretch reads RQLAMYECKVIAEKSHQE. Residue Cys-215 is modified to Cysteine sulfenic acid (-SOH); alternate. Residue Cys-215 forms a Glycyl cysteine thioester (Cys-Gly) (interchain with G-Cter in ubiquitin); alternate linkage. Residues 219-225 carry the KxHxx motif; that stretch reads AEKSHQE.

The protein belongs to the INSIG family. In terms of assembly, interacts with SCAP; interaction is direct and only takes place in the presence of sterols; it prevents interaction between SCAP and the coat protein complex II (COPII). Associates with the SCAP-SREBP complex (composed of SCAP and SREBF1/SREBP1 or SREBF2/SREBP2); association is mediated via its interaction with SCAP and only takes place in the presence of sterols. Interacts with RNF139. Interacts with RNF145. Phosphorylation at Ser-151 by PCK1 reduces binding to oxysterol, disrupting the interaction between INSIG2 and SCAP, thereby promoting nuclear translocation of SREBP proteins (SREBF1/SREBP1 or SREBF2/SREBP2) and subsequent transcription of downstream lipogenesis-related genes. In terms of processing, polyubiquitinated by AMFR/gp78 at Cys-215 in some tissues such as adipose tissues, undifferentiated myoblasts and liver, leading to its degradation. In differentiated myotubes, Cys-215 oxidation prevents ubiquitination at the same site, resulting in protein stabilization. Post-translationally, oxidized at Cys-215 in differentiated myotubes, preventing ubiquitination at the same site, and resulting in protein stabilization.

It is found in the endoplasmic reticulum membrane. Oxysterol-binding protein that mediates feedback control of cholesterol synthesis by controlling both endoplasmic reticulum to Golgi transport of SCAP and degradation of HMGCR. Acts as a negative regulator of cholesterol biosynthesis by mediating the retention of the SCAP-SREBP complex in the endoplasmic reticulum, thereby blocking the processing of sterol regulatory element-binding proteins (SREBPs) SREBF1/SREBP1 and SREBF2/SREBP2. Binds oxysterol, including 22-hydroxycholesterol, 24-hydroxycholesterol, 25-hydroxycholesterol and 27-hydroxycholesterol, regulating interaction with SCAP and retention of the SCAP-SREBP complex in the endoplasmic reticulum. In presence of oxysterol, interacts with SCAP, retaining the SCAP-SREBP complex in the endoplasmic reticulum, thereby preventing SCAP from escorting SREBF1/SREBP1 and SREBF2/SREBP2 to the Golgi. Sterol deprivation or phosphorylation by PCK1 reduce oxysterol-binding, disrupting the interaction between INSIG2 and SCAP, thereby promoting Golgi transport of the SCAP-SREBP complex, followed by processing and nuclear translocation of SREBF1/SREBP1 and SREBF2/SREBP2. Also regulates cholesterol synthesis by regulating degradation of HMGCR: initiates the sterol-mediated ubiquitin-mediated endoplasmic reticulum-associated degradation (ERAD) of HMGCR via recruitment of the reductase to the ubiquitin ligase RNF139. The chain is Insulin-induced gene 2 protein from Pongo abelii (Sumatran orangutan).